Reading from the N-terminus, the 283-residue chain is Zinc import ATP-binding protein ZnuC (283 aa).

In terms of domain architecture, ABC transporter spans 13-228 (VEMRNAGVHR…PEYVRLFGAR (216 aa)). 45–52 (GPNGSGKS) serves as a coordination point for ATP. Positions 264-283 (HHHDHARDGGQGGGGHGHAG) are disordered. Residues 272–283 (GGQGGGGHGHAG) show a composition bias toward gly residues.

This sequence belongs to the ABC transporter superfamily. Zinc importer (TC 3.A.1.15.5) family. As to quaternary structure, the complex is composed of two ATP-binding proteins (ZnuC), two transmembrane proteins (ZnuB) and a solute-binding protein (ZnuA).

The protein resides in the cell inner membrane. The catalysed reaction is Zn(2+)(out) + ATP(in) + H2O(in) = Zn(2+)(in) + ADP(in) + phosphate(in) + H(+)(in). In terms of biological role, part of the ABC transporter complex ZnuABC involved in zinc import. Responsible for energy coupling to the transport system. This Chelativorans sp. (strain BNC1) protein is Zinc import ATP-binding protein ZnuC.